Reading from the N-terminus, the 546-residue chain is Probable malate:quinone oxidoreductase (546 aa).

Belongs to the MQO family. It depends on FAD as a cofactor.

The enzyme catalyses (S)-malate + a quinone = a quinol + oxaloacetate. The protein operates within carbohydrate metabolism; tricarboxylic acid cycle; oxaloacetate from (S)-malate (quinone route): step 1/1. The polypeptide is Probable malate:quinone oxidoreductase (Acinetobacter baumannii (strain ACICU)).